A 503-amino-acid polypeptide reads, in one-letter code: Maturase K (503 aa).

This sequence belongs to the intron maturase 2 family. MatK subfamily.

The protein resides in the plastid. The protein localises to the chloroplast. In terms of biological role, usually encoded in the trnK tRNA gene intron. Probably assists in splicing its own and other chloroplast group II introns. The polypeptide is Maturase K (Vicia villosa (Hairy vetch)).